The primary structure comprises 345 residues: Protein phosphatase 1 regulatory subunit 7 (345 aa).

Residues Met1–Asp53 are disordered. The segment covering Glu13–Arg30 has biased composition (basic and acidic residues). 11 LRR repeats span residues Glu62–Leu83, Lys84–Val105, Ser106–Thr127, Glu128–Thr149, Lys150–Thr171, Ser172–Ser193, Ser194–His215, Asn216–Val237, Asn238–Lys259, Lys260–Thr281, and Asp282–Lys303. The region spanning Asn316–Phe345 is the LRRCT domain.

Belongs to the SDS22 family.

The protein localises to the nucleus. In terms of biological role, regulatory subunit of protein phosphatase 1. This Danio rerio (Zebrafish) protein is Protein phosphatase 1 regulatory subunit 7 (ppp1r7).